The chain runs to 94 residues: Small ribosomal subunit protein uS19 (94 aa).

It belongs to the universal ribosomal protein uS19 family.

Its function is as follows. Protein S19 forms a complex with S13 that binds strongly to the 16S ribosomal RNA. The sequence is that of Small ribosomal subunit protein uS19 (rpsS) from Lactobacillus acidophilus (strain ATCC 700396 / NCK56 / N2 / NCFM).